Consider the following 211-residue polypeptide: Uracil phosphoribosyltransferase (211 aa).

5-phospho-alpha-D-ribose 1-diphosphate is bound by residues Arg78, Arg103, and 130–138; that span reads DPMLATGNS. Residues Ile193 and 198 to 200 each bind uracil; that span reads GDA. Residue Asp199 participates in 5-phospho-alpha-D-ribose 1-diphosphate binding.

Belongs to the UPRTase family. It depends on Mg(2+) as a cofactor.

The catalysed reaction is UMP + diphosphate = 5-phospho-alpha-D-ribose 1-diphosphate + uracil. It functions in the pathway pyrimidine metabolism; UMP biosynthesis via salvage pathway; UMP from uracil: step 1/1. Its activity is regulated as follows. Allosterically activated by GTP. Functionally, catalyzes the conversion of uracil and 5-phospho-alpha-D-ribose 1-diphosphate (PRPP) to UMP and diphosphate. The protein is Uracil phosphoribosyltransferase of Acinetobacter baumannii (strain ATCC 17978 / DSM 105126 / CIP 53.77 / LMG 1025 / NCDC KC755 / 5377).